The primary structure comprises 494 residues: Aspartyl/glutamyl-tRNA(Asn/Gln) amidotransferase subunit B (494 aa).

Belongs to the GatB/GatE family. GatB subfamily. Heterotrimer of A, B and C subunits.

It catalyses the reaction L-glutamyl-tRNA(Gln) + L-glutamine + ATP + H2O = L-glutaminyl-tRNA(Gln) + L-glutamate + ADP + phosphate + H(+). The catalysed reaction is L-aspartyl-tRNA(Asn) + L-glutamine + ATP + H2O = L-asparaginyl-tRNA(Asn) + L-glutamate + ADP + phosphate + 2 H(+). Its function is as follows. Allows the formation of correctly charged Asn-tRNA(Asn) or Gln-tRNA(Gln) through the transamidation of misacylated Asp-tRNA(Asn) or Glu-tRNA(Gln) in organisms which lack either or both of asparaginyl-tRNA or glutaminyl-tRNA synthetases. The reaction takes place in the presence of glutamine and ATP through an activated phospho-Asp-tRNA(Asn) or phospho-Glu-tRNA(Gln). The protein is Aspartyl/glutamyl-tRNA(Asn/Gln) amidotransferase subunit B of Rhodopseudomonas palustris (strain HaA2).